Consider the following 264-residue polypeptide: Phosphoinositide-3-kinase-interacting protein 1 (264 aa).

The signal sequence occupies residues 1–21 (MLLAWVHTFLLSNMLLAEAYG). Residues 22 to 170 (SGGCFWDNGH…SKEKKDLGTL (149 aa)) lie on the Extracellular side of the membrane. The Kringle domain maps to 24 to 101 (GCFWDNGHLY…EKRPCEDVSC (78 aa)). 3 cysteine pairs are disulfide-bonded: cysteine 25/cysteine 101, cysteine 46/cysteine 82, and cysteine 70/cysteine 96. Positions 94 to 129 (RPCEDVSCPETTSQAPPPSSAMELEEKSGAPGDKEA) are disordered. Residues 117–129 (LEEKSGAPGDKEA) show a composition bias toward basic and acidic residues. The chain crosses the membrane as a helical span at residues 171 to 191 (GYVLGITMMVIILAIGAGIIV). Residues 192–264 (GYTYKRGKDL…LTGQAGTPGA (73 aa)) lie on the Cytoplasmic side of the membrane.

Its subcellular location is the cell membrane. Negative regulator of hepatic phosphatidylinositol 3-kinase (PI3K) activity. The polypeptide is Phosphoinositide-3-kinase-interacting protein 1 (Pik3ip1) (Mus musculus (Mouse)).